A 198-amino-acid polypeptide reads, in one-letter code: MDVHDVKLTISAVAAAQYPEDGHPEIAFLGRSNVGKSSLINKLIQRKAMARTSGVPGKTQTLNFYDLDSRLFFVDVPGYGYAKVSKTARAKFAAMIETYLTTRQPLRGVVLLVDSRHEPTADDISMYQYLKYYQLRTLVVATKIDKTPKSKRLHVAKQIKQRLDLNQTDDVILFSATTGEGYEAVWSWLEQTAGLEGR.

Residues 22–195 (GHPEIAFLGR…WSWLEQTAGL (174 aa)) form the EngB-type G domain. GTP contacts are provided by residues 30 to 37 (GRSNVGKS), 57 to 61 (GKTQT), 75 to 78 (DVPG), 142 to 145 (TKID), and 174 to 176 (FSA). Positions 37 and 59 each coordinate Mg(2+).

This sequence belongs to the TRAFAC class TrmE-Era-EngA-EngB-Septin-like GTPase superfamily. EngB GTPase family. The cofactor is Mg(2+).

Functionally, necessary for normal cell division and for the maintenance of normal septation. The protein is Probable GTP-binding protein EngB of Lacticaseibacillus paracasei (strain ATCC 334 / BCRC 17002 / CCUG 31169 / CIP 107868 / KCTC 3260 / NRRL B-441) (Lactobacillus paracasei).